A 382-amino-acid polypeptide reads, in one-letter code: Dual-specificity RNA methyltransferase RlmN (382 aa).

Glu-113 functions as the Proton acceptor in the catalytic mechanism. The region spanning Glu-119 to Asp-358 is the Radical SAM core domain. A disulfide bridge connects residues Cys-126 and Cys-363. Residues Cys-133, Cys-137, and Cys-140 each coordinate [4Fe-4S] cluster. Residues Gly-187–Glu-188, Ser-219, Ser-241–His-243, and Asn-320 contribute to the S-adenosyl-L-methionine site. Catalysis depends on Cys-363, which acts as the S-methylcysteine intermediate.

This sequence belongs to the radical SAM superfamily. RlmN family. [4Fe-4S] cluster serves as cofactor.

It localises to the cytoplasm. It carries out the reaction adenosine(2503) in 23S rRNA + 2 reduced [2Fe-2S]-[ferredoxin] + 2 S-adenosyl-L-methionine = 2-methyladenosine(2503) in 23S rRNA + 5'-deoxyadenosine + L-methionine + 2 oxidized [2Fe-2S]-[ferredoxin] + S-adenosyl-L-homocysteine. The catalysed reaction is adenosine(37) in tRNA + 2 reduced [2Fe-2S]-[ferredoxin] + 2 S-adenosyl-L-methionine = 2-methyladenosine(37) in tRNA + 5'-deoxyadenosine + L-methionine + 2 oxidized [2Fe-2S]-[ferredoxin] + S-adenosyl-L-homocysteine. Its function is as follows. Specifically methylates position 2 of adenine 2503 in 23S rRNA and position 2 of adenine 37 in tRNAs. m2A2503 modification seems to play a crucial role in the proofreading step occurring at the peptidyl transferase center and thus would serve to optimize ribosomal fidelity. The sequence is that of Dual-specificity RNA methyltransferase RlmN from Wigglesworthia glossinidia brevipalpis.